Here is a 267-residue protein sequence, read N- to C-terminus: Phosphate import ATP-binding protein PstB 2 (267 aa).

The region spanning Leu21–Val262 is the ABC transporter domain. An ATP-binding site is contributed by Gly53–Ser60.

The protein belongs to the ABC transporter superfamily. Phosphate importer (TC 3.A.1.7) family. The complex is composed of two ATP-binding proteins (PstB), two transmembrane proteins (PstC and PstA) and a solute-binding protein (PstS).

Its subcellular location is the cell membrane. It carries out the reaction phosphate(out) + ATP + H2O = ADP + 2 phosphate(in) + H(+). In terms of biological role, part of the ABC transporter complex PstSACB involved in phosphate import. Responsible for energy coupling to the transport system. The chain is Phosphate import ATP-binding protein PstB 2 from Streptococcus pyogenes serotype M1.